A 416-amino-acid polypeptide reads, in one-letter code: Phosphatidylinositol 5-phosphate 4-kinase type-2 beta (416 aa).

Ser2 is modified (N-acetylserine). Position 8 is a phosphothreonine (Thr8). Ser19 carries the post-translational modification Phosphoserine. In terms of domain architecture, PIPK spans 38-415 (ASEPILSVLM…RFNEFMSNIL (378 aa)). Residues 64–70 (VMLMPDD) form a required for interaction with PIP5K1A region. An N6-acetyllysine mark is found at Lys94 and Lys150. ATP-binding positions include 202–204 (RNV) and Lys214. Residues 203-204 (NV) and Lys214 each bind GTP. Position 322 is a phosphothreonine (Thr322). At Ser326 the chain carries Phosphoserine. Position 369 (Asp369) interacts with GTP.

Homodimer. Binds TNFRSF1A. Interacts with PIP4K2A; the interaction suppresses ubiquitination by the SPOP/CUL3 complex. Probably interacts with PIP5K1A; the interaction inhibits PIP5K1A kinase activity. In terms of processing, ubiquitinated by the SPOP/CUL3 complex. Ubiquitination is stimulated by PtdIns5P levels. Phosphorylated on serine residues.

The protein localises to the endoplasmic reticulum membrane. The protein resides in the cell membrane. Its subcellular location is the nucleus. It is found in the cytoplasm. The enzyme catalyses a 1,2-diacyl-sn-glycero-3-phospho-(1D-myo-inositol-5-phosphate) + ATP = a 1,2-diacyl-sn-glycero-3-phospho-(1D-myo-inositol-4,5-bisphosphate) + ADP + H(+). It catalyses the reaction 1,2-dihexadecanoyl-sn-glycero-3-phospho-(1D-myo-inositol-5-phosphate) + ATP = 1,2-dihexadecanoyl-sn-glycero-3-phospho-(1D-myo-inositol-4,5-bisphosphate) + ADP + H(+). It carries out the reaction 1,2-dihexadecanoyl-sn-glycero-3-phospho-(1D-myo-inositol-5-phosphate) + GTP = 1,2-dihexadecanoyl-sn-glycero-3-phospho-(1D-myo-inositol-4,5-bisphosphate) + GDP + H(+). Functionally, participates in the biosynthesis of phosphatidylinositol 4,5-bisphosphate. Preferentially utilizes GTP, rather than ATP, for PI(5)P phosphorylation and its activity reflects changes in direct proportion to the physiological GTP concentration. Its GTP-sensing activity is critical for metabolic adaptation. PIP4Ks negatively regulate insulin signaling through a catalytic-independent mechanism. They interact with PIP5Ks and suppress PIP5K-mediated PtdIns(4,5)P2 synthesis and insulin-dependent conversion to PtdIns(3,4,5)P3. This is Phosphatidylinositol 5-phosphate 4-kinase type-2 beta from Rattus norvegicus (Rat).